The primary structure comprises 470 residues: MNPNQKIICISATGMTLSVVSLLIGIANLGLNIGLHYKVGDTPDAPTPNVNGTNSTTTIINNNTQNNFTNITNIVQNKNEERTFLNLTKPLCEVNSWHILSKDNAIRIGEDAHILVTREPYLSCDPQGCRMFALSQGTTLRGRHANGTIHDRSPFRALISWEMGQAPSPYNVKIECIGWSSTSCHDGISRMSICMSGPNNNASAVVWYGGRPVTEIPSWAGNILRTQESECVCHKGICPVVMTDGPANNKAATKIIYFKEGKIQKIEELTGNAQHIEECSCYGAKEVIKCICRDNWKGANRPVITIDPEMMTHTSKYLCSKVLTDTSRPNDPTSGNCDAPVTGGSPDPGVKGFAFLDGENSWLGRTISKDSRSGYEMLKVPNAETSTQSGPIAHQVIVNNQNWSGYSGAFIDYWANKECFNPCFYVELIRGRPKESSVLWTSNSIVALCGSRERLGSWSWHDGAEIIYFK.

Residues 1–6 (MNPNQK) are Intravirion-facing. Residues 7–27 (IICISATGMTLSVVSLLIGIA) form a helical membrane-spanning segment. Residues 11–33 (SATGMTLSVVSLLIGIANLGLNI) are involved in apical transport and lipid raft association. Residues 28-470 (NLGLNIGLHY…HDGAEIIYFK (443 aa)) lie on the Virion surface side of the membrane. Residues 36-88 (HYKVGDTPDAPTPNVNGTNSTTTIINNNTQNNFTNITNIVQNKNEERTFLNLT) are hypervariable stalk region. Residues asparagine 51, asparagine 54, asparagine 62, asparagine 67, asparagine 70, and asparagine 86 are each glycosylated (N-linked (GlcNAc...) asparagine; by host). The interval 91-470 (LCEVNSWHIL…HDGAEIIYFK (380 aa)) is head of neuraminidase. Intrachain disulfides connect cysteine 92-cysteine 419, cysteine 124-cysteine 129, cysteine 184-cysteine 231, cysteine 233-cysteine 238, cysteine 279-cysteine 292, cysteine 281-cysteine 290, cysteine 319-cysteine 337, and cysteine 423-cysteine 449. Position 118 (arginine 118) interacts with substrate. Residue asparagine 146 is glycosylated (N-linked (GlcNAc...) asparagine; by host). Residue aspartate 151 is the Proton donor/acceptor of the active site. Arginine 152 is a substrate binding site. Asparagine 201 carries N-linked (GlcNAc...) asparagine; by host glycosylation. A substrate-binding site is contributed by 277 to 278 (EE). Arginine 293 provides a ligand contact to substrate. Residues aspartate 294, glycine 298, and aspartate 325 each contribute to the Ca(2+) site. Arginine 372 serves as a coordination point for substrate. Residue asparagine 402 is glycosylated (N-linked (GlcNAc...) asparagine; by host). Tyrosine 406 serves as the catalytic Nucleophile.

The protein belongs to the glycosyl hydrolase 34 family. Homotetramer. Ca(2+) is required as a cofactor. N-glycosylated.

Its subcellular location is the virion membrane. It is found in the host apical cell membrane. The enzyme catalyses Hydrolysis of alpha-(2-&gt;3)-, alpha-(2-&gt;6)-, alpha-(2-&gt;8)- glycosidic linkages of terminal sialic acid residues in oligosaccharides, glycoproteins, glycolipids, colominic acid and synthetic substrates.. Its activity is regulated as follows. Inhibited by the neuraminidase inhibitors zanamivir (Relenza) and oseltamivir (Tamiflu). These drugs interfere with the release of progeny virus from infected cells and are effective against all influenza strains. Resistance to neuraminidase inhibitors is quite rare. Catalyzes the removal of terminal sialic acid residues from viral and cellular glycoconjugates. Cleaves off the terminal sialic acids on the glycosylated HA during virus budding to facilitate virus release. Additionally helps virus spread through the circulation by further removing sialic acids from the cell surface. These cleavages prevent self-aggregation and ensure the efficient spread of the progeny virus from cell to cell. Otherwise, infection would be limited to one round of replication. Described as a receptor-destroying enzyme because it cleaves a terminal sialic acid from the cellular receptors. May facilitate viral invasion of the upper airways by cleaving the sialic acid moieties on the mucin of the airway epithelial cells. Likely to plays a role in the budding process through its association with lipid rafts during intracellular transport. May additionally display a raft-association independent effect on budding. Plays a role in the determination of host range restriction on replication and virulence. Sialidase activity in late endosome/lysosome traffic seems to enhance virus replication. The sequence is that of Neuraminidase from Influenza A virus (strain A/Gull/Astrakhan/227/1984 H13N6).